The sequence spans 344 residues: Oxygen sensor histidine kinase NreB (344 aa).

Cysteine 58, cysteine 61, cysteine 73, and cysteine 76 together coordinate [4Fe-4S] cluster. A Histidine kinase domain is found at 147–344 (ENERKRISRE…GTIITLDIPI (198 aa)). A Phosphohistidine; by autocatalysis modification is found at histidine 158.

[4Fe-4S] cluster is required as a cofactor. Post-translationally, autophosphorylated.

Its subcellular location is the cytoplasm. The enzyme catalyses ATP + protein L-histidine = ADP + protein N-phospho-L-histidine.. Member of the two-component regulatory system NreB/NreC involved in the control of dissimilatory nitrate/nitrite reduction in response to oxygen. NreB functions as a direct oxygen sensor histidine kinase which is autophosphorylated, in the absence of oxygen, probably at the conserved histidine residue, and transfers its phosphate group probably to a conserved aspartate residue of NreC. NreB/NreC activates the expression of the nitrate (narGHJI) and nitrite (nir) reductase operons, as well as the putative nitrate transporter gene narT. This is Oxygen sensor histidine kinase NreB (nreB) from Staphylococcus epidermidis (strain ATCC 12228 / FDA PCI 1200).